The sequence spans 1139 residues: uncharacterized protein (1139 aa).

This sequence belongs to the IIV-6 295L family.

This is an uncharacterized protein from Aedes vexans (Inland floodwater mosquito).